A 365-amino-acid polypeptide reads, in one-letter code: Peptide chain release factor 2 (365 aa).

An N5-methylglutamine modification is found at Q252.

It belongs to the prokaryotic/mitochondrial release factor family. Methylated by PrmC. Methylation increases the termination efficiency of RF2.

Its subcellular location is the cytoplasm. Functionally, peptide chain release factor 2 directs the termination of translation in response to the peptide chain termination codons UGA and UAA. This Escherichia coli O8 (strain IAI1) protein is Peptide chain release factor 2.